A 415-amino-acid chain; its full sequence is Serine hydroxymethyltransferase (415 aa).

(6S)-5,6,7,8-tetrahydrofolate-binding positions include leucine 115 and 119-121 (GHL). Lysine 224 is subject to N6-(pyridoxal phosphate)lysine. 348–350 (SPF) is a (6S)-5,6,7,8-tetrahydrofolate binding site.

Belongs to the SHMT family. As to quaternary structure, homodimer. Requires pyridoxal 5'-phosphate as cofactor.

The protein resides in the cytoplasm. It catalyses the reaction (6R)-5,10-methylene-5,6,7,8-tetrahydrofolate + glycine + H2O = (6S)-5,6,7,8-tetrahydrofolate + L-serine. It participates in one-carbon metabolism; tetrahydrofolate interconversion. The protein operates within amino-acid biosynthesis; glycine biosynthesis; glycine from L-serine: step 1/1. In terms of biological role, catalyzes the reversible interconversion of serine and glycine with tetrahydrofolate (THF) serving as the one-carbon carrier. This reaction serves as the major source of one-carbon groups required for the biosynthesis of purines, thymidylate, methionine, and other important biomolecules. Also exhibits THF-independent aldolase activity toward beta-hydroxyamino acids, producing glycine and aldehydes, via a retro-aldol mechanism. The protein is Serine hydroxymethyltransferase of Latilactobacillus sakei subsp. sakei (strain 23K) (Lactobacillus sakei subsp. sakei).